We begin with the raw amino-acid sequence, 512 residues long: Protein maph-9 (512 aa).

Disordered regions lie at residues 24 to 103 (ISRK…DDDF), 168 to 386 (DLSE…KNEK), and 481 to 512 (GNRL…RPFR). 2 stretches are compositionally biased toward low complexity: residues 30–39 (TTTTSSGSSG) and 78–95 (STLS…STAA). A compositionally biased stretch (basic and acidic residues) spans 178–200 (TDHEDPSLTFRVDKELEQSESKK). Residues 230–239 (PQTSANLSTK) show a composition bias toward polar residues. Composition is skewed to basic and acidic residues over residues 260 to 302 (KPSD…RENS) and 310 to 386 (VQDH…KNEK). Positions 267-429 (KEWLQKKERE…QLEESEKMTR (163 aa)) form a coiled coil. Residues 502 to 512 (PGTTTSLRPFR) are compositionally biased toward polar residues.

Expressed in amphid and phasmid ciliated neurons.

It localises to the cell projection. Its subcellular location is the cilium. It is found in the cytoplasm. The protein resides in the cytoskeleton. The protein localises to the cilium axoneme. The polypeptide is Protein maph-9 (Caenorhabditis elegans).